The following is a 330-amino-acid chain: Phosphate acyltransferase (330 aa).

This sequence belongs to the PlsX family. In terms of assembly, homodimer. Probably interacts with PlsY.

It is found in the cytoplasm. The enzyme catalyses a fatty acyl-[ACP] + phosphate = an acyl phosphate + holo-[ACP]. It participates in lipid metabolism; phospholipid metabolism. Its function is as follows. Catalyzes the reversible formation of acyl-phosphate (acyl-PO(4)) from acyl-[acyl-carrier-protein] (acyl-ACP). This enzyme utilizes acyl-ACP as fatty acyl donor, but not acyl-CoA. The sequence is that of Phosphate acyltransferase from Streptococcus pneumoniae (strain P1031).